A 157-amino-acid chain; its full sequence is Mediator of RNA polymerase II transcription subunit 22 (157 aa).

The protein belongs to the Mediator complex subunit 22 family. In terms of assembly, component of the Mediator complex.

It localises to the nucleus. Component of the Mediator complex, a coactivator involved in the regulated transcription of nearly all RNA polymerase II-dependent genes. Mediator functions as a bridge to convey information from gene-specific regulatory proteins to the basal RNA polymerase II transcription machinery. Mediator is recruited to promoters by direct interactions with regulatory proteins and serves as a scaffold for the assembly of a functional preinitiation complex with RNA polymerase II and the general transcription factors. This Caenorhabditis elegans protein is Mediator of RNA polymerase II transcription subunit 22 (mdt-22).